Consider the following 415-residue polypeptide: Actin-like protein 7B (415 aa).

The disordered stretch occupies residues 1-31; the sequence is MATRNSPMPLGTAQGDPGEAGTRPGPDASLR. Serine 6 is subject to Phosphoserine.

This sequence belongs to the actin family. As to expression, detected only in the testis and, to a lesser extent, in the prostate.

The protein resides in the cytoplasm. It localises to the cytoskeleton. The protein is Actin-like protein 7B (ACTL7B) of Homo sapiens (Human).